The sequence spans 107 residues: Iron-sulfur cluster assembly protein CyaY (107 aa).

It belongs to the frataxin family.

Functionally, involved in iron-sulfur (Fe-S) cluster assembly. May act as a regulator of Fe-S biogenesis. The protein is Iron-sulfur cluster assembly protein CyaY of Neisseria gonorrhoeae (strain ATCC 700825 / FA 1090).